Consider the following 262-residue polypeptide: MAVGKNKRTSKGKKGGKKKVTDVFTKKEWYDLKAPKMFLVRNFGKTLVTKTIGKKLATDSLKGRIYEVNLADLNNDEDQAHKKIKLSCDHIINRDCYTDFCGLSITRDKLCSLIRKGYTLIEGHTDVKTLDNYHLRMFCIAFTKKRQNQTKSTCYAQTSQIKKIRKKMVDIMTAEASKVLLKDLVKKFIPESIGKEIEKQCKKIYPLQNVLIRKVKILKRPKLDISKLMELHTDPKEESGKNVNALPESKEATNILTAELKH.

It belongs to the eukaryotic ribosomal protein eS1 family. In terms of assembly, component of the small ribosomal subunit. Mature ribosomes consist of a small (40S) and a large (60S) subunit. The 40S subunit contains about 32 different proteins and 1 molecule of RNA (18S). The 60S subunit contains about 42 different proteins and 3 molecules of RNA (28S, 5.8S and 5S).

The protein resides in the cytoplasm. In terms of biological role, component of the ribosome, a large ribonucleoprotein complex responsible for the synthesis of proteins in the cell. The small ribosomal subunit (SSU) binds messenger RNAs (mRNAs) and translates the encoded message by selecting cognate aminoacyl-transfer RNA (tRNA) molecules. The large subunit (LSU) contains the ribosomal catalytic site termed the peptidyl transferase center (PTC), which catalyzes the formation of peptide bonds, thereby polymerizing the amino acids delivered by tRNAs into a polypeptide chain. The nascent polypeptides leave the ribosome through a tunnel in the LSU and interact with protein factors that function in enzymatic processing, targeting, and the membrane insertion of nascent chains at the exit of the ribosomal tunnel. The sequence is that of Small ribosomal subunit protein eS1 from Plasmodium falciparum (isolate 3D7).